Here is a 504-residue protein sequence, read N- to C-terminus: Maturase K (504 aa).

It belongs to the intron maturase 2 family. MatK subfamily.

It localises to the plastid. The protein resides in the chloroplast. Functionally, usually encoded in the trnK tRNA gene intron. Probably assists in splicing its own and other chloroplast group II introns. The polypeptide is Maturase K (Adenostoma fasciculatum (Chamise)).